A 472-amino-acid polypeptide reads, in one-letter code: MTTHLVWFRQDLRLHDNLALAAACRNSSARVLALYIATPRQWATHNMSPRQAELINAQLNGLQIALAEKGIPLLFREVDDFVASVEIVKQVCAENSVTHLFYNYQYEVNERARDVEVERALRNVVCEGFDDSVILPPGAVMTGNHEMYKVFTPFKNAWLKRLREGMPECVAAPKVRSSGSIEPSPSITLNYPRQSFDTAHFPVEEKAAIAQLRQFCQNGAGEYEQQRDFPAVEGTSRLSASLATGGLSPRQCLHRLLAEQPQALDGGAGSVWLNELIWREFYRHLITYHPSLCKHRPFIAWTDRVQWQSNPAHLQAWQEGKTGYPIVDAAMRQLNSTGWMHNRLRMITASFLVKDLLIDWREGERYFMSQLIDGDLAANNGGWQWAASTGTDAAPYFRIFNPTTQGEKFDHEGEFIRQWLPELRDVPGKVVHEPWKWAQKAGVTLDYPQPIVEHKEARVQTLAAYEAARKGK.

In terms of domain architecture, Photolyase/cryptochrome alpha/beta spans 2–134 (TTHLVWFRQD…VCEGFDDSVI (133 aa)). Asn109 and Glu110 together coordinate (6R)-5,10-methylene-5,6,7,8-tetrahydrofolate. Tyr223 contacts FAD. Arg227 contacts DNA. Residues 235 to 239 (TSRLS), Trp272, and 275 to 282 (ELIWREFY) contribute to the FAD site. Interaction with DNA regions lie at residues 275–282 (ELIWREFY) and 342–343 (NR). Position 373 to 375 (373 to 375 (DGD)) interacts with FAD. Gln405 is a binding site for DNA.

This sequence belongs to the DNA photolyase class-1 family. In terms of assembly, monomer. It depends on FAD as a cofactor. The cofactor is (6R)-5,10-methylene-5,6,7,8-tetrahydrofolate.

It carries out the reaction cyclobutadipyrimidine (in DNA) = 2 pyrimidine residues (in DNA).. Its function is as follows. Involved in repair of UV radiation-induced DNA damage. Catalyzes the light-dependent monomerization (300-600 nm) of cyclobutyl pyrimidine dimers (in cis-syn configuration), which are formed between adjacent bases on the same DNA strand upon exposure to ultraviolet radiation. This Escherichia coli (strain K12) protein is Deoxyribodipyrimidine photo-lyase (phrB).